The sequence spans 237 residues: Uridylate kinase (237 aa).

9 to 12 contacts ATP; it reads KFSG. The involved in allosteric activation by GTP stretch occupies residues 17-22; the sequence is GEAGYG. Gly51 lines the UMP pocket. The ATP site is built by Gly52 and Arg56. UMP is bound by residues Asp72 and 133–140; that span reads TGNPFFTT. 3 residues coordinate ATP: Thr160, Tyr166, and Asp169.

This sequence belongs to the UMP kinase family. In terms of assembly, homohexamer.

The protein resides in the cytoplasm. The enzyme catalyses UMP + ATP = UDP + ADP. The protein operates within pyrimidine metabolism; CTP biosynthesis via de novo pathway; UDP from UMP (UMPK route): step 1/1. Its activity is regulated as follows. Allosterically activated by GTP. Inhibited by UTP. In terms of biological role, catalyzes the reversible phosphorylation of UMP to UDP. The polypeptide is Uridylate kinase (Sulfurimonas denitrificans (strain ATCC 33889 / DSM 1251) (Thiomicrospira denitrificans (strain ATCC 33889 / DSM 1251))).